The sequence spans 346 residues: Quinolinate synthase (346 aa).

Iminosuccinate is bound by residues H47 and S68. C113 contacts [4Fe-4S] cluster. Iminosuccinate contacts are provided by residues 139–141 (YAN) and S156. C200 is a binding site for [4Fe-4S] cluster. Residues 226-228 (HPE) and T243 contribute to the iminosuccinate site. C297 lines the [4Fe-4S] cluster pocket.

The protein belongs to the quinolinate synthase family. Type 1 subfamily. The cofactor is [4Fe-4S] cluster.

It is found in the cytoplasm. It catalyses the reaction iminosuccinate + dihydroxyacetone phosphate = quinolinate + phosphate + 2 H2O + H(+). Its pathway is cofactor biosynthesis; NAD(+) biosynthesis; quinolinate from iminoaspartate: step 1/1. Its function is as follows. Catalyzes the condensation of iminoaspartate with dihydroxyacetone phosphate to form quinolinate. The chain is Quinolinate synthase from Pseudoalteromonas translucida (strain TAC 125).